Reading from the N-terminus, the 603-residue chain is uncharacterized protein (603 aa).

The tract at residues 257 to 281 (AGEAASSDHDQKISRVTRKRPREPK) is disordered.

This is an uncharacterized protein from Saccharomyces cerevisiae (strain ATCC 204508 / S288c) (Baker's yeast).